A 222-amino-acid polypeptide reads, in one-letter code: Interleukin-12 subunit alpha (222 aa).

An N-terminal signal peptide occupies residues 1-25 (MCPLRSLFLMATLVFLNHLDHLSLA). 3 disulfide bridges follow: Cys40–Cys113, Cys67–Cys199, and Cys88–Cys126. N-linked (GlcNAc...) asparagine glycans are attached at residues Asn96 and Asn174.

Belongs to the IL-6 superfamily. Heterodimer with IL12B; disulfide-linked. This heterodimer is known as interleukin IL-12. Heterodimer with EBI3/IL27B; not disulfide-linked. This heterodimer is known as interleukin IL-35. Interacts with NBR1; this interaction promotes IL-12 secretion.

Its subcellular location is the secreted. Functionally, heterodimerizes with IL12B to form the IL-12 cytokine or with EBI3/IL27B to form the IL-35 cytokine. IL-12 is primarily produced by professional antigen-presenting cells (APCs) such as B-cells and dendritic cells (DCs) as well as macrophages and granulocytes and regulates T-cell and natural killer-cell responses, induces the production of interferon-gamma (IFN-gamma), favors the differentiation of T-helper 1 (Th1) cells and is an important link between innate resistance and adaptive immunity. Mechanistically, exerts its biological effects through a receptor composed of IL12R1 and IL12R2 subunits. Binding to the receptor results in the rapid tyrosine phosphorylation of a number of cellular substrates including the JAK family kinases TYK2 and JAK2. In turn, recruited STAT4 gets phosphorylated and translocates to the nucleus where it regulates cytokine/growth factor responsive genes. As part of IL-35, plays essential roles in maintaining the immune homeostasis of the liver microenvironment and also functions as an immune-suppressive cytokine. Mediates biological events through unconventional receptors composed of IL12RB2 and gp130/IL6ST heterodimers or homodimers. Signaling requires the transcription factors STAT1 and STAT4, which form a unique heterodimer that binds to distinct DNA sites. The polypeptide is Interleukin-12 subunit alpha (IL12A) (Lama glama (Llama)).